The primary structure comprises 688 residues: Potassium-transporting ATPase ATP-binding subunit (688 aa).

The next 4 membrane-spanning stretches (helical) occupy residues 35 to 55 (VMMVVWCCCVLLTIVCGVQFA), 62 to 82 (AVFSLGVTAWLWFTLLFANLA), 219 to 239 (IALSILLVALTLVFLLAVVTL), and 260 to 280 (VLVALLVCLIPTTIGGLLSAI). The active-site 4-aspartylphosphate intermediate is D313. ATP-binding positions include D350, E354, 383-390 (FSAQTRMS), and K401. The Mg(2+) site is built by D524 and D528. Helical transmembrane passes span 594–614 (FAILPAAFITTYPQLGALNLM), 622–642 (AILSAVIFNALIIIGLIPLAL), and 668–688 (VVLPFIGIKVIDLFLTLMGWI).

This sequence belongs to the cation transport ATPase (P-type) (TC 3.A.3) family. Type IA subfamily. In terms of assembly, the system is composed of three essential subunits: KdpA, KdpB and KdpC.

The protein localises to the cell inner membrane. The enzyme catalyses K(+)(out) + ATP + H2O = K(+)(in) + ADP + phosphate + H(+). In terms of biological role, part of the high-affinity ATP-driven potassium transport (or Kdp) system, which catalyzes the hydrolysis of ATP coupled with the electrogenic transport of potassium into the cytoplasm. This subunit is responsible for energy coupling to the transport system and for the release of the potassium ions to the cytoplasm. This Tolumonas auensis (strain DSM 9187 / NBRC 110442 / TA 4) protein is Potassium-transporting ATPase ATP-binding subunit.